The primary structure comprises 103 residues: Putative glutaredoxin-C14 (103 aa).

The Glutaredoxin domain maps to 1-102 (MDRVMKLASE…PMLKNAGALW (102 aa)). An intrachain disulfide couples Cys-21 to Cys-24. A Responsive for interaction with TGA factors motif is present at residues 100–103 (ALWL).

Belongs to the glutaredoxin family. CC-type subfamily.

The protein localises to the cytoplasm. Its subcellular location is the nucleus. Functionally, has a glutathione-disulfide oxidoreductase activity in the presence of NADPH and glutathione reductase. Reduces low molecular weight disulfides and proteins. This Oryza sativa subsp. japonica (Rice) protein is Putative glutaredoxin-C14 (GRXC14).